The sequence spans 230 residues: Orotidine 5'-phosphate decarboxylase (230 aa).

Substrate is bound by residues aspartate 10, lysine 32, 59-68 (DLKFHDIPRT), threonine 116, arginine 177, glutamine 186, glycine 206, and arginine 207. Lysine 61 acts as the Proton donor in catalysis.

This sequence belongs to the OMP decarboxylase family. Type 1 subfamily. As to quaternary structure, homodimer.

The catalysed reaction is orotidine 5'-phosphate + H(+) = UMP + CO2. It participates in pyrimidine metabolism; UMP biosynthesis via de novo pathway; UMP from orotate: step 2/2. Its function is as follows. Catalyzes the decarboxylation of orotidine 5'-monophosphate (OMP) to uridine 5'-monophosphate (UMP). The chain is Orotidine 5'-phosphate decarboxylase from Methylacidiphilum infernorum (isolate V4) (Methylokorus infernorum (strain V4)).